We begin with the raw amino-acid sequence, 502 residues long: Histidine--tRNA ligase (502 aa).

It belongs to the class-II aminoacyl-tRNA synthetase family. As to quaternary structure, homodimer.

It localises to the cytoplasm. The catalysed reaction is tRNA(His) + L-histidine + ATP = L-histidyl-tRNA(His) + AMP + diphosphate + H(+). This chain is Histidine--tRNA ligase, found in Brucella abortus (strain S19).